Consider the following 116-residue polypeptide: Proline-rich protein 9 (116 aa).

The chain is Proline-rich protein 9 (PRR9) from Bos taurus (Bovine).